The primary structure comprises 563 residues: Beta-catenin-like protein 1 (563 aa).

Position 1 is an N-acetylmethionine (Met-1). The segment at 1-81 is disordered; sequence MDVGELLSYQ…EEEEPLDESS (81 aa). The Nuclear localization signal motif lies at 16–33; sequence KRPRDDEEEELKTRRKQT. A compositionally biased stretch (basic and acidic residues) spans 34–45; that stretch reads GPRERGRYREEE. Residues 66 to 78 show a composition bias toward acidic residues; the sequence is DGEEEEEEEEPLD. HEAT repeat units lie at residues 79-129 and 134-176; these read ESSV…VVAT and YHLL…TLHE. Lys-91 carries the N6-acetyllysine modification. Positions 130-140 match the Nuclear export signal (NES) motif; sequence MPDLYHLLVEL. ARM repeat units lie at residues 178 to 228, 229 to 273, 274 to 323, 325 to 363, and 364 to 417; these read EEGA…MAEF, RPEM…LQDN, DENR…CLML, SNRERFLKGEGLQLMNLMLREKKVSRSSALKVLDHAMIG, and PEGT…LLRN. At Ser-389 the chain carries Phosphoserine. Residues 476–540 are a coiled coil; sequence DMEDEFYLRR…HIIKEYAENI (65 aa). At Ser-545 the chain carries Phosphoserine.

In terms of assembly, component of the PRP19-CDC5L splicing complex composed of a core complex comprising a homotetramer of PRPF19, CDC5L, PLRG1 and BCAS2, and at least three less stably associated proteins CTNNBL1, CWC15 and HSPA8. Interacts directly with CWC15 and CDC5L in the complex. Interacts with AICDA; the interaction is important for the antibody diversification activity of AICDA. Interacts with PRPF31 (via its NLS). Interacts (via its N-terminal NLS) with KPNA1 and KPNA2.

Its subcellular location is the nucleus. In terms of biological role, component of the PRP19-CDC5L complex that forms an integral part of the spliceosome and is required for activating pre-mRNA splicing. Participates in AID/AICDA-mediated somatic hypermutation (SHM) and class-switch recombination (CSR), 2 processes resulting in the production of high-affinity, mutated isotype-switched antibodies. This Mus musculus (Mouse) protein is Beta-catenin-like protein 1 (Ctnnbl1).